A 460-amino-acid chain; its full sequence is Kynureninase (460 aa).

Residues Leu-116, Thr-117, 144-147 (FPSD), Ser-199, Asp-228, His-231, and Tyr-253 each bind pyridoxal 5'-phosphate. N6-(pyridoxal phosphate)lysine is present on Lys-254. Trp-288 and Asn-316 together coordinate pyridoxal 5'-phosphate.

Belongs to the kynureninase family. As to quaternary structure, homodimer. Requires pyridoxal 5'-phosphate as cofactor.

Its subcellular location is the cytoplasm. It carries out the reaction L-kynurenine + H2O = anthranilate + L-alanine + H(+). The enzyme catalyses 3-hydroxy-L-kynurenine + H2O = 3-hydroxyanthranilate + L-alanine + H(+). The protein operates within amino-acid degradation; L-kynurenine degradation; L-alanine and anthranilate from L-kynurenine: step 1/1. It functions in the pathway cofactor biosynthesis; NAD(+) biosynthesis; quinolinate from L-kynurenine: step 2/3. Its function is as follows. Catalyzes the cleavage of L-kynurenine (L-Kyn) and L-3-hydroxykynurenine (L-3OHKyn) into anthranilic acid (AA) and 3-hydroxyanthranilic acid (3-OHAA), respectively. The protein is Kynureninase of Debaryomyces hansenii (strain ATCC 36239 / CBS 767 / BCRC 21394 / JCM 1990 / NBRC 0083 / IGC 2968) (Yeast).